The following is a 111-amino-acid chain: Ig kappa chain V-III region PC 2485/PC 4039 (111 aa).

Positions 1–23 are framework-1; the sequence is DIVLTQSPASLAVSLGQRATISC. C23 and C92 are joined by a disulfide. The segment at 24–38 is complementarity-determining-1; the sequence is RASKSVSTSGYSYMH. Residues 39 to 53 are framework-2; sequence WYQQKPGQPPKLLIY. Residues 54–60 are complementarity-determining-2; sequence LASSLES. A framework-3 region spans residues 61–92; that stretch reads GVPARFSGSGSGTDFTLNIQPVEEEDAAIYYC. The segment at 93-101 is complementarity-determining-3; the sequence is QHSRELPLT. The framework-4 stretch occupies residues 102–111; sequence FGAGTKLELK.

In Mus musculus (Mouse), this protein is Ig kappa chain V-III region PC 2485/PC 4039.